We begin with the raw amino-acid sequence, 983 residues long: Seizure protein 6 homolog (983 aa).

An N-terminal signal peptide occupies residues 1–19 (MRPAALLLLPSLLALLVHG). Disordered stretches follow at residues 80 to 132 (GQEK…WSLE) and 148 to 194 (PGMA…QTTG). Over residues 101 to 112 (NQDSRPVFTSPT) the composition is skewed to polar residues. Residues 154–167 (TPGPGERPNTPPPS) show a composition bias toward pro residues. A glycan (N-linked (GlcNAc...) asparagine) is linked at asparagine 278. Residues 344–403 (LSCHFPRRPAYGAVTVTSLHPGGSARFRCATGYQLKGARLLTCLNATQPFWDSQEPVCIA) enclose the Sushi 1 domain. 12 disulfides stabilise this stretch: cysteine 346-cysteine 386, cysteine 372-cysteine 401, cysteine 405-cysteine 432, cysteine 521-cysteine 563, cysteine 548-cysteine 578, cysteine 582-cysteine 608, cysteine 699-cysteine 741, cysteine 727-cysteine 754, cysteine 760-cysteine 802, cysteine 788-cysteine 819, cysteine 827-cysteine 869, and cysteine 855-cysteine 884. Asparagine 388, asparagine 425, and asparagine 530 each carry an N-linked (GlcNAc...) asparagine glycan. The CUB 1 domain maps to 405-516 (CGGVIRNATT…AGMALRYEAF (112 aa)). Residues 519–580 (GHCYEPFVKY…WNETEPACRA (62 aa)) form the Sushi 2 domain. The region spanning 582–693 (CSGETTDSAG…QGFVIHFFEV (112 aa)) is the CUB 2 domain. 3 consecutive Sushi domains span residues 697-756 (DTCP…SCQR), 758-821 (TSCL…KCLL), and 825-886 (KPCH…ICRA). A helical transmembrane segment spans residues 915–935 (LAAAIFLPLVAMALLVGGVYL).

Belongs to the SEZ6 family.

The protein localises to the cell membrane. May play a role in cell-cell recognition and in neuronal membrane signaling. Seems to be important for the achievement of the necessary balance between dendrite elongation and branching during the elaboration of a complex dendritic arbor. Involved in the development of appropriate excitatory synaptic connectivity. This is Seizure protein 6 homolog (SEZ6) from Bos taurus (Bovine).